The chain runs to 349 residues: Mitogen-activated protein kinase sty1 (349 aa).

Positions 20–299 constitute a Protein kinase domain; it reads YSDLQPIGMG…AADALAHNYL (280 aa). ATP contacts are provided by residues 26 to 34 and Lys49; that span reads IGMGAFGLV. The active-site Proton acceptor is the Asp141. Thr171 carries the post-translational modification Phosphothreonine. A TXY motif is present at residues 171 to 173; it reads TGY. The residue at position 173 (Tyr173) is a Phosphotyrosine. Position 175 is a phosphoserine (Ser175). Thr176 is subject to Phosphothreonine. A TXY motif is present at residues 176-178; sequence TRY.

Belongs to the protein kinase superfamily. Ser/Thr protein kinase family. MAP kinase subfamily. HOG1 sub-subfamily. In terms of assembly, interacts with cdc37, cmk2, hal4, sin1 and srk1. Mg(2+) serves as cofactor. Post-translationally, dually phosphorylated on Thr-171 and Tyr-173, which activates the enzyme. Phosphorylated by wis1 in response to osmotic stress, nutrient limitation, hydrogen peroxide and arsenite. Dephosphorylated by pyp1 and pyp2.

It localises to the cytoplasm. The protein resides in the nucleus. The catalysed reaction is L-seryl-[protein] + ATP = O-phospho-L-seryl-[protein] + ADP + H(+). It catalyses the reaction L-threonyl-[protein] + ATP = O-phospho-L-threonyl-[protein] + ADP + H(+). With respect to regulation, activated by the MAPK kinase wisl, and negatively regulated by pypl and pyp2 tyrosine phosphatases. Its function is as follows. Proline-directed serine/threonine-protein kinase involved in a signal transduction pathway that is activated by changes in the osmolarity of the extracellular environment. Controls osmotic regulation of transcription of target genes. Involved in osmoregulation and stress response pathways leading to an efficient start of sexual differentiation. Supports translation initiation and facilitates adaptation to environmental stress in part through reducing eIF2-alpha phosphorylation. Links the cell-cycle G2/M control with changes in the extracellular environment that affect cell physiology. Phosphorylates atf1 and mkp1. In conjunction with hal4, has a role in the cellular resistance to toxic cations such as Na(+), Li(+) and Ca(2+). Involved in resistance to arsenite, methylglyoxal and hydrogen peroxide. Involved in induction of thermotolerance in mRNA export, as well as in vacuolar fission. In Schizosaccharomyces pombe (strain 972 / ATCC 24843) (Fission yeast), this protein is Mitogen-activated protein kinase sty1 (sty1).